We begin with the raw amino-acid sequence, 160 residues long: MPAFDIVSEVDNVELKNAVDNATRELATRFDFRGVDASFELKGENIKIKAEDDFQLSQLVDILRGNLAKRGVDARAMDIKDAVHSGKNFYQDIDFKQGVDTLIAKKLVKEIKASKIKVQAAIQGEQLRITGKKRDDLQAVMALVREGDFGQPFQFTNFRD.

The protein belongs to the YajQ family.

In terms of biological role, nucleotide-binding protein. This Aliivibrio fischeri (strain ATCC 700601 / ES114) (Vibrio fischeri) protein is Nucleotide-binding protein VF_1240.